The following is a 578-amino-acid chain: MSSKKMVNSVEGCADDALAGLVASNPDLQLLQGHRVALRSDLDTLKGRVALLSGGGSGHEPAHAGFIGKGMLTGVIAGSVFASPPVGSILAAIRAVAQAGTVGTLLIVKNYTGDRLNFGLAMEQAKAEGISVEMVIVEDDSAFTVLKKAGRRGLCGTVLIHKVAGALAEEGMGLEEITKRVSVIAKTMGTLGVSLSSCSVPGATHTFELAADEIELGLGIHGEAGVRRIKIAPVDQIVTLMLDHMTNTSNIFHVPVRSGSSVVLIVNNLGGLSFLELGIIADAAIRLLEGRGVKVARALVGTFMSALEMPGVSLTLMLVDEPVLKLIDAETTAKAWPHMAKVSVTGRKRIRAAPTEPPEAPEATAAGGVTSKQMALVLDRICTTLIGLEEHLNALDRAAGDGDCGSTHSRAAKAIQGWLKEGPSLTSPAQVLSRLSVLLLERMGGSSGALYGLFLTAAAQPLKAKTDLPTWSAAMDAGLESMQKYGKAAPGDRTMLDSLWAAAQEFQAWKSPGASLLPVLTKAVKSAEAAAEATKNMEAGAGRASYISSAQLDQPDPGAVAAAAIFRAILEVLQTQGA.

The 328-residue stretch at 9–336 (SVEGCADDAL…IDAETTAKAW (328 aa)) folds into the DhaK domain. Residues 56 to 59 (GSGH), lysine 109, and aspartate 114 each bind dihydroxyacetone. The Tele-hemiaminal-histidine intermediate role is filled by histidine 221. The 200-residue stretch at 372 to 571 (KQMALVLDRI…AAAIFRAILE (200 aa)) folds into the DhaL domain. ATP contacts are provided by residues 401–404 (DGDC), 446–447 (SS), glycine 486, and 494–495 (TM). Residues serine 511 and serine 545 each carry the phosphoserine modification. 556 to 558 (DPG) provides a ligand contact to ATP.

It belongs to the dihydroxyacetone kinase (DAK) family. Homodimer. Interacts with IFIH1 (via the CARD domains), the interaction is inhibited by viral infection. The cofactor is Mg(2+). It depends on Mn(2+) as a cofactor. Requires Co(2+) as cofactor.

The catalysed reaction is dihydroxyacetone + ATP = dihydroxyacetone phosphate + ADP + H(+). The enzyme catalyses D-glyceraldehyde + ATP = D-glyceraldehyde 3-phosphate + ADP + H(+). It catalyses the reaction FAD = riboflavin cyclic-4',5'-phosphate + AMP + H(+). Its activity is regulated as follows. Each activity is inhibited by the substrate(s) of the other. In terms of biological role, catalyzes both the phosphorylation of dihydroxyacetone and of glyceraldehyde, and the splitting of ribonucleoside diphosphate-X compounds among which FAD is the best substrate. Represses IFIH1-mediated cellular antiviral response. This chain is Triokinase/FMN cyclase, found in Mus musculus (Mouse).